A 263-amino-acid chain; its full sequence is 5'-nucleotidase SurE (263 aa).

4 residues coordinate a divalent metal cation: Asp-10, Asp-11, Ser-41, and Asn-95.

The protein belongs to the SurE nucleotidase family. The cofactor is a divalent metal cation.

The protein localises to the cytoplasm. It catalyses the reaction a ribonucleoside 5'-phosphate + H2O = a ribonucleoside + phosphate. Its function is as follows. Nucleotidase that shows phosphatase activity on nucleoside 5'-monophosphates. The polypeptide is 5'-nucleotidase SurE (Methanoculleus marisnigri (strain ATCC 35101 / DSM 1498 / JR1)).